The following is a 564-amino-acid chain: Proline--tRNA ligase (564 aa).

Belongs to the class-II aminoacyl-tRNA synthetase family. ProS type 1 subfamily. In terms of assembly, homodimer.

The protein resides in the cytoplasm. It catalyses the reaction tRNA(Pro) + L-proline + ATP = L-prolyl-tRNA(Pro) + AMP + diphosphate. In terms of biological role, catalyzes the attachment of proline to tRNA(Pro) in a two-step reaction: proline is first activated by ATP to form Pro-AMP and then transferred to the acceptor end of tRNA(Pro). As ProRS can inadvertently accommodate and process non-cognate amino acids such as alanine and cysteine, to avoid such errors it has two additional distinct editing activities against alanine. One activity is designated as 'pretransfer' editing and involves the tRNA(Pro)-independent hydrolysis of activated Ala-AMP. The other activity is designated 'posttransfer' editing and involves deacylation of mischarged Ala-tRNA(Pro). The misacylated Cys-tRNA(Pro) is not edited by ProRS. The chain is Proline--tRNA ligase from Xanthomonas axonopodis pv. citri (strain 306).